The chain runs to 175 residues: Protein LHCP TRANSLOCATION DEFECT (175 aa).

Residues 1–68 (MASSSISFSC…WFKFGKNGVD (68 aa)) constitute a chloroplast transit peptide. The ANK repeat unit spans residues 117-149 (PVDILLMLAATEGDRPKIEELLKAGADYSVKDA).

Interacts with CAO/cpSRP43, but is not a component of the transit complex. Interacts with LHCP (via T14 domain), TIC40 and TIC110. In terms of tissue distribution, highly expressed in leaves and seedlings. Detected in roots, but not in germinating seeds.

The protein resides in the plastid. Its subcellular location is the chloroplast thylakoid membrane. It is found in the chloroplast envelope. The protein localises to the chloroplast stroma. In terms of biological role, involved in the import of light-harvesting complex proteins (LHCP) and subsequent routing of these proteins to the chloroplast signal recognition particle (SRP) pathway. The sequence is that of Protein LHCP TRANSLOCATION DEFECT (LTD) from Arabidopsis thaliana (Mouse-ear cress).